Here is a 284-residue protein sequence, read N- to C-terminus: uncharacterized protein (284 aa).

Residues 1 to 27 (MSNLPTSTPVSPSNLAEENPKSNNPES) show a composition bias toward polar residues. Disordered stretches follow at residues 1 to 29 (MSNL…ESSE) and 248 to 284 (TRDS…LKKK).

This is an uncharacterized protein from Caenorhabditis elegans.